We begin with the raw amino-acid sequence, 268 residues long: Phosphoethanolamine/phosphocholine phosphatase (268 aa).

D32 serves as the catalytic Nucleophile. Residues D32 and D34 each coordinate Mg(2+). D34 acts as the Proton donor in catalysis. D43 and D123 together coordinate substrate. D203 contributes to the Mg(2+) binding site.

It belongs to the HAD-like hydrolase superfamily. PHOSPHO family. It depends on Mg(2+) as a cofactor. In terms of tissue distribution, expressed at sites of mineralization in bone and cartilage. Highly expressed in hypertrophic chondrocytes compared to non-chondrogenic tissues. Expressed in chondrocytes but not in heart, liver, lung, kidney, spleen, muscle, adipose tissues not duodenum. In diaphyseal cortical bone, it is expressed in the osteoid layer of the periosteum, forming surfaces of growing osteons, and newly formed osteocytes, whereas it is not expressed in the endosteum and closed osteons. In growth plate cartilage, it is limited to the early hypertrophic chondrocytes and the ossification groove of Ranvier. Highly expressed on the mineralization surfaces of the cartilage remnants and trabecular bone within the primary spongiosa. Expressed in 17-day-old embryonic calvaria, the osteoid present on the intramembranous and periosteal bone surfaces but not in soft tissues examined.

The protein resides in the extracellular vesicle. The catalysed reaction is phosphoethanolamine + H2O = ethanolamine + phosphate. It carries out the reaction phosphocholine + H2O = choline + phosphate. Phosphatase that has a high activity toward phosphoethanolamine (PEA) and phosphocholine (PCho). Involved in the generation of inorganic phosphate for bone mineralization. The chain is Phosphoethanolamine/phosphocholine phosphatase (PHOSPHO1) from Gallus gallus (Chicken).